Consider the following 318-residue polypeptide: MNLKDIAKIINSDFSGEYFEITKMNTLRDATKSEISFVANAKYIKEIQNSNAGAIIVSKDTKEFVPSGCVALVVENPYWEMATLSKYFAPSIEDETLPEPKIGEGTTISPRAEIARGAIIGKGCTIMAHVYIGTNAVIGDNTIIYPSVTVYRDCRVGSECIIHANTTIGSDGFGFATNKQGEHRKIYQNGNVEIEDNVEIGSSTTIDRAVFGTTLIKYGVRIDNLVQVGHNCVIGEHSVLVAQAGISGSTTMGRNVVMGGQSATAGHLSIAPFTTMAARSGVTKSIDKSGLTFAGFPLLEHRLWLKLQAKIARLIKQN.

Residue His230 is the Proton acceptor of the active site.

It belongs to the transferase hexapeptide repeat family. LpxD subfamily. As to quaternary structure, homotrimer.

The enzyme catalyses a UDP-3-O-[(3R)-3-hydroxyacyl]-alpha-D-glucosamine + a (3R)-hydroxyacyl-[ACP] = a UDP-2-N,3-O-bis[(3R)-3-hydroxyacyl]-alpha-D-glucosamine + holo-[ACP] + H(+). It functions in the pathway bacterial outer membrane biogenesis; LPS lipid A biosynthesis. Its function is as follows. Catalyzes the N-acylation of UDP-3-O-acylglucosamine using 3-hydroxyacyl-ACP as the acyl donor. Is involved in the biosynthesis of lipid A, a phosphorylated glycolipid that anchors the lipopolysaccharide to the outer membrane of the cell. This chain is UDP-3-O-acylglucosamine N-acyltransferase 1, found in Sulfurimonas denitrificans (strain ATCC 33889 / DSM 1251) (Thiomicrospira denitrificans (strain ATCC 33889 / DSM 1251)).